A 143-amino-acid polypeptide reads, in one-letter code: Large ribosomal subunit protein uL11 (143 aa).

It belongs to the universal ribosomal protein uL11 family. Part of the ribosomal stalk of the 50S ribosomal subunit. Interacts with L10 and the large rRNA to form the base of the stalk. L10 forms an elongated spine to which L12 dimers bind in a sequential fashion forming a multimeric L10(L12)X complex. In terms of processing, one or more lysine residues are methylated.

Its function is as follows. Forms part of the ribosomal stalk which helps the ribosome interact with GTP-bound translation factors. This Janthinobacterium sp. (strain Marseille) (Minibacterium massiliensis) protein is Large ribosomal subunit protein uL11.